A 180-amino-acid polypeptide reads, in one-letter code: NAD(P)H-quinone oxidoreductase subunit I, chloroplastic (180 aa).

4Fe-4S ferredoxin-type domains lie at 55–84 (GRIH…VDWR) and 95–124 (LNYS…MTEE). The [4Fe-4S] cluster site is built by cysteine 64, cysteine 67, cysteine 70, cysteine 74, cysteine 104, cysteine 107, cysteine 110, and cysteine 114.

This sequence belongs to the complex I 23 kDa subunit family. In terms of assembly, NDH is composed of at least 16 different subunits, 5 of which are encoded in the nucleus. [4Fe-4S] cluster serves as cofactor.

It localises to the plastid. Its subcellular location is the chloroplast thylakoid membrane. The enzyme catalyses a plastoquinone + NADH + (n+1) H(+)(in) = a plastoquinol + NAD(+) + n H(+)(out). The catalysed reaction is a plastoquinone + NADPH + (n+1) H(+)(in) = a plastoquinol + NADP(+) + n H(+)(out). NDH shuttles electrons from NAD(P)H:plastoquinone, via FMN and iron-sulfur (Fe-S) centers, to quinones in the photosynthetic chain and possibly in a chloroplast respiratory chain. The immediate electron acceptor for the enzyme in this species is believed to be plastoquinone. Couples the redox reaction to proton translocation, and thus conserves the redox energy in a proton gradient. This chain is NAD(P)H-quinone oxidoreductase subunit I, chloroplastic, found in Chloranthus spicatus (Chulantree).